The following is a 456-amino-acid chain: Membrane-bound lytic murein transglycosylase F (456 aa).

Positions M1 to C22 are cleaved as a signal peptide. The non-LT domain stretch occupies residues S23–F267. The segment at G268 to L456 is LT domain. E314 is an active-site residue.

In the N-terminal section; belongs to the bacterial solute-binding protein 3 family. It in the C-terminal section; belongs to the transglycosylase Slt family.

It is found in the cell outer membrane. It carries out the reaction Exolytic cleavage of the (1-&gt;4)-beta-glycosidic linkage between N-acetylmuramic acid (MurNAc) and N-acetylglucosamine (GlcNAc) residues in peptidoglycan, from either the reducing or the non-reducing ends of the peptidoglycan chains, with concomitant formation of a 1,6-anhydrobond in the MurNAc residue.. In terms of biological role, murein-degrading enzyme that degrades murein glycan strands and insoluble, high-molecular weight murein sacculi, with the concomitant formation of a 1,6-anhydromuramoyl product. Lytic transglycosylases (LTs) play an integral role in the metabolism of the peptidoglycan (PG) sacculus. Their lytic action creates space within the PG sacculus to allow for its expansion as well as for the insertion of various structures such as secretion systems and flagella. The polypeptide is Membrane-bound lytic murein transglycosylase F (Maricaulis maris (strain MCS10) (Caulobacter maris)).